Consider the following 255-residue polypeptide: Triosephosphate isomerase (255 aa).

Residue 10-12 (NWK) coordinates substrate. The active-site Electrophile is the histidine 96. Glutamate 168 acts as the Proton acceptor in catalysis. Substrate is bound by residues glycine 174, serine 213, and 234–235 (GG).

Belongs to the triosephosphate isomerase family. As to quaternary structure, homodimer.

Its subcellular location is the cytoplasm. The enzyme catalyses D-glyceraldehyde 3-phosphate = dihydroxyacetone phosphate. Its pathway is carbohydrate biosynthesis; gluconeogenesis. The protein operates within carbohydrate degradation; glycolysis; D-glyceraldehyde 3-phosphate from glycerone phosphate: step 1/1. In terms of biological role, involved in the gluconeogenesis. Catalyzes stereospecifically the conversion of dihydroxyacetone phosphate (DHAP) to D-glyceraldehyde-3-phosphate (G3P). The polypeptide is Triosephosphate isomerase (Histophilus somni (strain 129Pt) (Haemophilus somnus)).